We begin with the raw amino-acid sequence, 312 residues long: Apolipoprotein E (312 aa).

Positions 1-18 are cleaved as a signal peptide; sequence MKALWAVLLATLLTGCLA. 8 tandem repeats follow at residues 72 to 93, 94 to 115, 116 to 137, 138 to 159, 160 to 181, 182 to 203, 204 to 225, and 226 to 247. The 8 X 22 AA approximate tandem repeats stretch occupies residues 72–247; the sequence is VLMEDTMTEV…RLEEMREHME (176 aa). Residue M135 is modified to Methionine sulfoxide. Residues 150–160 are LDL and other lipoprotein receptors binding; it reads HLRKMRKRLMR. Residues 150-160 form an LDL receptor binding region; sequence HLRKMRKRLMR. Position 154–157 (154–157) interacts with heparin; that stretch reads MRKR. The interval 202 to 282 is lipid-binding and lipoprotein association; it reads TANLGAGAAQ…SWFEPLVEDM (81 aa). Residue 221–228 participates in heparin binding; sequence SERLRGRL. Positions 258-312 are homooligomerization; it reads QQIRLQAEIFQARLKSWFEPLVEDMHRQLANLVEKIQSSVATNSVLSTSVPQENQ. The segment at 270 to 282 is specificity for association with VLDL; the sequence is RLKSWFEPLVEDM.

It belongs to the apolipoprotein A1/A4/E family. As to quaternary structure, homotetramer. May interact with ABCA1; functionally associated with ABCA1 in the biogenesis of HDLs. May interact with APP/A4 amyloid-beta peptide; the interaction is extremely stable in vitro but its physiological significance is unclear. May interact with MAPT. May interact with MAP2. In the cerebrospinal fluid, interacts with secreted SORL1. Interacts with PMEL; this allows the loading of PMEL luminal fragment on ILVs to induce fibril nucleation. In terms of processing, APOE exists as multiple glycosylated and sialylated glycoforms within cells and in plasma. The extent of glycosylation and sialylation are tissue and context specific. Post-translationally, glycated in plasma VLDL. Phosphorylated by FAM20C in the extracellular medium.

It localises to the secreted. It is found in the extracellular space. The protein resides in the extracellular matrix. The protein localises to the extracellular vesicle. Its subcellular location is the endosome. It localises to the multivesicular body. In terms of biological role, APOE is an apolipoprotein, a protein associating with lipid particles, that mainly functions in lipoprotein-mediated lipid transport between organs via the plasma and interstitial fluids. APOE is a core component of plasma lipoproteins and is involved in their production, conversion and clearance. Apolipoproteins are amphipathic molecules that interact both with lipids of the lipoprotein particle core and the aqueous environment of the plasma. As such, APOE associates with chylomicrons, chylomicron remnants, very low density lipoproteins (VLDL) and intermediate density lipoproteins (IDL) but shows a preferential binding to high-density lipoproteins (HDL). It also binds a wide range of cellular receptors including the LDL receptor/LDLR, the LDL receptor-related proteins LRP1, LRP2 and LRP8 and the very low-density lipoprotein receptor/VLDLR that mediate the cellular uptake of the APOE-containing lipoprotein particles. Finally, APOE also has a heparin-binding activity and binds heparan-sulfate proteoglycans on the surface of cells, a property that supports the capture and the receptor-mediated uptake of APOE-containing lipoproteins by cells. A main function of APOE is to mediate lipoprotein clearance through the uptake of chylomicrons, VLDLs, and HDLs by hepatocytes. APOE is also involved in the biosynthesis by the liver of VLDLs as well as their uptake by peripheral tissues ensuring the delivery of triglycerides and energy storage in muscle, heart and adipose tissues. By participating in the lipoprotein-mediated distribution of lipids among tissues, APOE plays a critical role in plasma and tissues lipid homeostasis. APOE is also involved in two steps of reverse cholesterol transport, the HDLs-mediated transport of cholesterol from peripheral tissues to the liver, and thereby plays an important role in cholesterol homeostasis. First, it is functionally associated with ABCA1 in the biogenesis of HDLs in tissues. Second, it is enriched in circulating HDLs and mediates their uptake by hepatocytes. APOE also plays an important role in lipid transport in the central nervous system, regulating neuron survival and sprouting. The polypeptide is Apolipoprotein E (Apoe) (Arvicanthis niloticus (African grass rat)).